We begin with the raw amino-acid sequence, 289 residues long: Dermonecrotic toxin LarSicTox-betaID1 (289 aa).

The signal sequence occupies residues 1 to 2; sequence EG. A propeptide spanning residues 3–11 is cleaved from the precursor; it reads AEQDGSERT. Residue H22 is part of the active site. E42 and D44 together coordinate Mg(2+). The active-site Nucleophile is the H58. 2 disulfides stabilise this stretch: C62/C68 and C64/C207. D102 is a binding site for Mg(2+).

It belongs to the arthropod phospholipase D family. Class II subfamily. It depends on Mg(2+) as a cofactor. In terms of tissue distribution, expressed by the venom gland.

The protein resides in the secreted. It catalyses the reaction an N-(acyl)-sphingosylphosphocholine = an N-(acyl)-sphingosyl-1,3-cyclic phosphate + choline. It carries out the reaction N-hexanoyl-sphing-4-enine-1-phosphocholine = N-(hexanoyl)-sphing-4-enine-1,3-cyclic phosphate + choline. The enzyme catalyses N-(dodecanoyl)-sphing-4-enine-1-phosphocholine = N-dodecanoyl-sphing-4-enine-1,3-cyclic phosphate + choline. The catalysed reaction is an N-(acyl)-sphingosylphosphoethanolamine = an N-(acyl)-sphingosyl-1,3-cyclic phosphate + ethanolamine. It catalyses the reaction N-dodecanoyl-heptadecasphing-4-enine-1-phosphoethanolamine = N-dodecanoyl-heptadecasphing-4-enine-1,3-cyclic phosphate + ethanolamine. It carries out the reaction a 1-acyl-sn-glycero-3-phosphocholine = a 1-acyl-sn-glycero-2,3-cyclic phosphate + choline. The enzyme catalyses 1-tetradecanoyl-sn-glycero-3-phosphocholine = 1-tetradecanoyl-sn-glycero-2,3-cyclic phosphate + choline. The catalysed reaction is 1-octanoyl-sn-glycero-3-phosphocholine = 1-octanoyl-sn-glycero-2,3-cyclic phosphate + choline. It catalyses the reaction a 1-acyl-sn-glycero-3-phosphoethanolamine = a 1-acyl-sn-glycero-2,3-cyclic phosphate + ethanolamine. It carries out the reaction 1-tetradecanoyl-sn-glycero-3-phosphoethanolamine = 1-tetradecanoyl-sn-glycero-2,3-cyclic phosphate + ethanolamine. Functionally, dermonecrotic toxins cleave the phosphodiester linkage between the phosphate and headgroup of certain phospholipids (sphingolipid and lysolipid substrates), forming an alcohol (often choline) and a cyclic phosphate. This toxin acts on sphingomyelin (SM) and on ceramide phosphoethanolamine (CPE) with high activity. It also acts on lysophosphatidylcholine (LPC) and on lysophosphatidylethanolamine (LPE) with moderate activity. It is not active on lysophosphatidylserine (LPS), and lysophosphatidylglycerol (LPG). It acts by transphosphatidylation, releasing exclusively cyclic phosphate as second products. It is not surprising that spider toxins have affinity for ethanolamine-containing sphingolipids since they are common in insect prey. On mammals, induces dermonecrosis, hemolysis, increased vascular permeability, edema, inflammatory response, and platelet aggregation. This chain is Dermonecrotic toxin LarSicTox-betaID1, found in Loxosceles arizonica (Arizona brown spider).